The following is a 1755-amino-acid chain: Transposon Ty1-GR3 Gag-Pol polyprotein (1755 aa).

3 stretches are compositionally biased toward polar residues: residues 1 to 10 (MESQQLSNYP), 48 to 60 (TKAN…TPAS), and 127 to 152 (QSQF…GNTF). Disordered regions lie at residues 1 to 93 (MESQ…MMTQ), 126 to 173 (PQSQ…RPPP), and 352 to 421 (GSRN…SKST). A compositionally biased stretch (low complexity) spans 153–165 (TDSSSADSDMTST). Residues 299–401 (NNGIHINNKV…NSKSKTARAH (103 aa)) are RNA-binding. A compositionally biased stretch (low complexity) spans 402 to 418 (NVSTSNNSPSTDNDSIS). Ser-416 is subject to Phosphoserine. The active-site For protease activity; shared with dimeric partner is the Asp-461. The tract at residues 583 to 640 (NVHTSESTRKYPYPFIHRMLAHANAQTIRYSLKNNTITYFNESDVDWSSAIDYQCPDC) is integrase-type zinc finger-like. Residues 660 to 835 (NSYEPFQYLH…AGLDISTLLP (176 aa)) form the Integrase catalytic domain. Residues Asp-671 and Asp-736 each contribute to the Mg(2+) site. The tract at residues 956 to 1172 (SKAVSPTDST…LGGIGDSNAY (217 aa)) is disordered. The span at 960-969 (SPTDSTPPST) shows a compositional bias: low complexity. Polar residues-rich tracts occupy residues 1005–1015 (STPQISNIEST) and 1031–1043 (MSQS…SYAS). Over residues 1044–1053 (KSKDFRHSDS) the composition is skewed to basic and acidic residues. Polar residues-rich tracts occupy residues 1054-1082 (YSDN…QTSE) and 1095-1106 (SIDTSSSESNSL). Residues 1178-1212 (KKRSLEDNETEIKVSRDTWNTKNMRSLEPPRSKKR) carry the Bipartite nuclear localization signal motif. The Reverse transcriptase Ty1/copia-type domain maps to 1338–1476 (NNYYITQLDI…DILGLEIKYQ (139 aa)). Mg(2+) is bound by residues Asp-1346, Asp-1427, Asp-1428, Asp-1610, Glu-1652, and Asp-1685. The region spanning 1610–1752 (DASYGNQPYY…IKTFKLLTNK (143 aa)) is the RNase H Ty1/copia-type domain.

The capsid protein forms a homotrimer, from which the VLPs are assembled. The protease is a homodimer, whose active site consists of two apposed aspartic acid residues. Initially, virus-like particles (VLPs) are composed of the structural unprocessed proteins Gag and Gag-Pol, and also contain the host initiator methionine tRNA (tRNA(i)-Met) which serves as a primer for minus-strand DNA synthesis, and a dimer of genomic Ty RNA. Processing of the polyproteins occurs within the particle and proceeds by an ordered pathway, called maturation. First, the protease (PR) is released by autocatalytic cleavage of the Gag-Pol polyprotein yielding capsid protein p45 and a Pol-p154 precursor protein. This cleavage is a prerequisite for subsequent processing of Pol-p154 at the remaining sites to release the mature structural and catalytic proteins. Maturation takes place prior to the RT reaction and is required to produce transposition-competent VLPs.

It localises to the cytoplasm. The protein localises to the nucleus. The catalysed reaction is DNA(n) + a 2'-deoxyribonucleoside 5'-triphosphate = DNA(n+1) + diphosphate. It carries out the reaction Endonucleolytic cleavage to 5'-phosphomonoester.. In terms of biological role, capsid protein (CA) is the structural component of the virus-like particle (VLP), forming the shell that encapsulates the retrotransposons dimeric RNA genome. The particles are assembled from trimer-clustered units and there are holes in the capsid shells that allow for the diffusion of macromolecules. CA also has nucleocapsid-like chaperone activity, promoting primer tRNA(i)-Met annealing to the multipartite primer-binding site (PBS), dimerization of Ty1 RNA and initiation of reverse transcription. Functionally, the aspartyl protease (PR) mediates the proteolytic cleavages of the Gag and Gag-Pol polyproteins after assembly of the VLP. Reverse transcriptase/ribonuclease H (RT) is a multifunctional enzyme that catalyzes the conversion of the retro-elements RNA genome into dsDNA within the VLP. The enzyme displays a DNA polymerase activity that can copy either DNA or RNA templates, and a ribonuclease H (RNase H) activity that cleaves the RNA strand of RNA-DNA heteroduplexes during plus-strand synthesis and hydrolyzes RNA primers. The conversion leads to a linear dsDNA copy of the retrotransposon that includes long terminal repeats (LTRs) at both ends. Its function is as follows. Integrase (IN) targets the VLP to the nucleus, where a subparticle preintegration complex (PIC) containing at least integrase and the newly synthesized dsDNA copy of the retrotransposon must transit the nuclear membrane. Once in the nucleus, integrase performs the integration of the dsDNA into the host genome. The protein is Transposon Ty1-GR3 Gag-Pol polyprotein (TY1B-GR3) of Saccharomyces cerevisiae (strain ATCC 204508 / S288c) (Baker's yeast).